The sequence spans 172 residues: MGLGNPGRRYALTRHNAGHMVLDELFRRHGGRWRRARRAEAAEVSVEGREAVLLKPATFMNESGEALSGYRAEDLIVVHDDLDLPAGTVRVKVGGGAGGHNGLRSVISRVGNGFVRVRVGIGRPPEGADVTGYVLGRMDRAAREAIPRAADAVEAVLEEGPEAAMNRFNARA.

TRNA is bound at residue Y10. Catalysis depends on H15, which acts as the Proton acceptor. Residues F59, N61, and N101 each contribute to the tRNA site.

The protein belongs to the PTH family. In terms of assembly, monomer.

The protein localises to the cytoplasm. The catalysed reaction is an N-acyl-L-alpha-aminoacyl-tRNA + H2O = an N-acyl-L-amino acid + a tRNA + H(+). In terms of biological role, hydrolyzes ribosome-free peptidyl-tRNAs (with 1 or more amino acids incorporated), which drop off the ribosome during protein synthesis, or as a result of ribosome stalling. Catalyzes the release of premature peptidyl moieties from peptidyl-tRNA molecules trapped in stalled 50S ribosomal subunits, and thus maintains levels of free tRNAs and 50S ribosomes. The polypeptide is Peptidyl-tRNA hydrolase (Rubrobacter xylanophilus (strain DSM 9941 / JCM 11954 / NBRC 16129 / PRD-1)).